Reading from the N-terminus, the 439-residue chain is Chromosomal replication initiator protein DnaA (439 aa).

A domain I, interacts with DnaA modulators region spans residues 1-75; that stretch reads MESWSRCLER…GIREVVLAIG (75 aa). Residues 75–101 form a domain II region; it reads GSRPKTTELPVPVDTTGRLSSTVPFNG. The tract at residues 102–319 is domain III, AAA+ region; sequence NLDTHYNFDN…GALNTLVARA (218 aa). Positions 147, 149, 150, and 151 each coordinate ATP. A domain IV, binds dsDNA region spans residues 320–439; sequence NFTGRAVTIE…WDKLMRKFSE (120 aa).

Belongs to the DnaA family. In terms of assembly, oligomerizes as a right-handed, spiral filament on DNA at oriC.

Its subcellular location is the cytoplasm. In terms of biological role, plays an essential role in the initiation and regulation of chromosomal replication. ATP-DnaA binds to the origin of replication (oriC) to initiate formation of the DNA replication initiation complex once per cell cycle. Binds the DnaA box (a 9 base pair repeat at the origin) and separates the double-stranded (ds)DNA. Forms a right-handed helical filament on oriC DNA; dsDNA binds to the exterior of the filament while single-stranded (ss)DNA is stabiized in the filament's interior. The ATP-DnaA-oriC complex binds and stabilizes one strand of the AT-rich DNA unwinding element (DUE), permitting loading of DNA polymerase. After initiation quickly degrades to an ADP-DnaA complex that is not apt for DNA replication. Binds acidic phospholipids. This chain is Chromosomal replication initiator protein DnaA, found in Xylella fastidiosa (strain 9a5c).